We begin with the raw amino-acid sequence, 898 residues long: Cilium assembly protein DZIP1 (898 aa).

A disordered region spans residues 14–66 (DPPGTHSSAGIPSLLSSPQSQPSSGSQSRPAPSTMSGPLTSSGASTSIPPPFK). The segment covering 25 to 46 (PSLLSSPQSQPSSGSQSRPAPS) has biased composition (low complexity). A compositionally biased stretch (polar residues) spans 47–60 (TMSGPLTSSGASTS). The stretch at 145-197 (LSISLQAAEERLLAEAREREQICVQLQKKTQDAKALKEELKQRKKIIASQQAM) forms a coiled coil. The segment at 207 to 230 (HKCQHCEKAFMNASFLQSHMQRRH) adopts a C2H2-type zinc-finger fold. 2 coiled-coil regions span residues 242 to 353 (NQKK…VQTQ) and 407 to 447 (SAVS…ISSK). Over residues 435 to 463 (TSQNKQMKQISSKPPTITVQREGVSTPSP) the composition is skewed to polar residues. 3 disordered regions span residues 435-509 (TSQN…SWQK), 585-739 (EQRV…WTDG), and 773-878 (KSLE…DAGT). Over residues 495-505 (SSISESPTENR) the composition is skewed to low complexity. Positions 573-590 (YRRALKEISHKLEQRVKE) form a coiled coil. The segment covering 605 to 652 (VVQSRPRSSSFPSTVTRVMSGPASKQQRTPQPVPRSRTNVPHKTSTPL) has biased composition (polar residues). A compositionally biased stretch (acidic residues) spans 662-684 (SDEDSSEEEEEEEEEEESSDEES). Composition is skewed to polar residues over residues 685 to 715 (PQMQ…QSVR) and 723 to 734 (AEPTNVTTLSDS). Positions 797-815 (KPTDVRNTRQNAKKELKYS) are enriched in basic and acidic residues. The span at 816–826 (DDDDDDDDDWD) shows a compositional bias: acidic residues. A compositionally biased stretch (polar residues) spans 855-866 (DTSTSVWGSSTG).

The protein belongs to the DZIP C2H2-type zinc-finger protein family. Expressed throughout the embryo starting at 12 hours.

It localises to the cell projection. The protein localises to the cilium. The protein resides in the cytoplasm. It is found in the cytoskeleton. Its subcellular location is the cilium basal body. It localises to the microtubule organizing center. The protein localises to the centrosome. The protein resides in the centriole. It is found in the nucleus. In terms of biological role, molecular adapter that recruits protein complexes required for cilium assembly and function to the cilium basal body. Required for establishment of left-right asymmetry during embryogenesis. Acts as a permissive factor that is required for the proper regulation of Hedgehog (Hh) target genes in response to Hh signals. Acts downstream of the Smoothened protein to modulate Gli activity in the somites of the developing embryo. In Danio rerio (Zebrafish), this protein is Cilium assembly protein DZIP1 (dzip1).